The following is a 35-amino-acid chain: PTEN upstream open reading frame MP31 (35 aa).

As to quaternary structure, interacts with lactate dehydrogenases LDHA and LDHB; interaction with mitochondrial LDH leads to inhibition of lactate dehydrogenase activity, preventing conversion of lactate to pyruvate. As to expression, detected in brain, kidney and liver (at protein level).

Its subcellular location is the mitochondrion. Its function is as follows. Inhibits lactate dehydrogenase (LDH)-mediated conversion of lactate to pyruvate in mitochondria by competing with mitochondrial LDH for binding to NAD(+). Also inhibits cellular lactate utilization. The chain is PTEN upstream open reading frame MP31 from Mus musculus (Mouse).